Here is a 304-residue protein sequence, read N- to C-terminus: MRLPIFLDTDPGIDDAVAIAAAIFTPELDLQLMTTVAGNVSVEKTTRNALQLLHFWNVDIPLAQGAAVPLVRAPRDAASVHGESGMAGYDFVEHNRKPLGIPAFLAIRDALMRAPEPVTLVAIGPLTNIALLLSQCPECKPYIRRLVIMGGSAGRGNCTPNAEFNIAADPEAASCVFRSGIEIVMCGLDVTNQAILTPDYLATLPELNRTGKMLHALFSHYRSGSMQSGLRMHDLCAIAWLVRPELFTLKPCFVAVETQGEFTSGTTVVDIDGCLGKPANVKVALDLNVKGFQQWVAEVLALVP.

The active site involves His-233.

Belongs to the IUNH family. RihC subfamily.

In terms of biological role, hydrolyzes both purine and pyrimidine ribonucleosides with a broad-substrate specificity. This Escherichia coli O127:H6 (strain E2348/69 / EPEC) protein is Non-specific ribonucleoside hydrolase RihC.